The chain runs to 169 residues: Ribosome maturation factor RimM (169 aa).

A PRC barrel domain is found at 96 to 169; it reads DGEYYWADLI…RILVDWGLDY (74 aa).

The protein belongs to the RimM family. Binds ribosomal protein uS19.

Its subcellular location is the cytoplasm. Functionally, an accessory protein needed during the final step in the assembly of 30S ribosomal subunit, possibly for assembly of the head region. Essential for efficient processing of 16S rRNA. May be needed both before and after RbfA during the maturation of 16S rRNA. It has affinity for free ribosomal 30S subunits but not for 70S ribosomes. The chain is Ribosome maturation factor RimM from Chromobacterium violaceum (strain ATCC 12472 / DSM 30191 / JCM 1249 / CCUG 213 / NBRC 12614 / NCIMB 9131 / NCTC 9757 / MK).